A 609-amino-acid chain; its full sequence is Mitochondrial nucleoid-associated protein 1 (609 aa).

The Extracellular segment spans residues 1-554 (MSDNPPRMEV…CNTTIRKSGF (554 aa)). Disordered regions lie at residues 133 to 163 (QEET…GESR) and 406 to 425 (SPEG…QASH). The segment covering 146 to 161 (TSPKRELAEDLPKSGE) has biased composition (basic and acidic residues). The chain crosses the membrane as a helical span at residues 555–571 (GGITMLSTGYFVLCCSW). The Cytoplasmic segment spans residues 572 to 609 (SFRRLKKLCRPLPWKSTVPPSVGVAKTTGDCRSKTCLD).

The protein localises to the mitochondrion inner membrane. It localises to the mitochondrion matrix. It is found in the mitochondrion nucleoid. Critical regulator of mitochondrial DNA (mtDNA) abundance. Binds dsDNA throughout the mitochondrial genome without sequence specificity and controls mtDNA copy number by promoting its replication. Also plays important roles in mitochondrial metabolism and cell proliferation. This is Mitochondrial nucleoid-associated protein 1 from Pongo abelii (Sumatran orangutan).